The chain runs to 329 residues: tRNA-modifying protein YgfZ (329 aa).

Folate is bound by residues Trp28 and Trp188.

Belongs to the tRNA-modifying YgfZ family.

The protein localises to the cytoplasm. Its function is as follows. Folate-binding protein involved in regulating the level of ATP-DnaA and in the modification of some tRNAs. It is probably a key factor in regulatory networks that act via tRNA modification, such as initiation of chromosomal replication. This Photorhabdus laumondii subsp. laumondii (strain DSM 15139 / CIP 105565 / TT01) (Photorhabdus luminescens subsp. laumondii) protein is tRNA-modifying protein YgfZ.